A 634-amino-acid chain; its full sequence is Glutamate--tRNA ligase (634 aa).

The 'HIGH' region signature appears at 108-118; sequence PNPSGPLHIGH.

This sequence belongs to the class-I aminoacyl-tRNA synthetase family. Glutamate--tRNA ligase type 2 subfamily.

The protein localises to the cytoplasm. It carries out the reaction tRNA(Glu) + L-glutamate + ATP = L-glutamyl-tRNA(Glu) + AMP + diphosphate. Functionally, catalyzes the attachment of glutamate to tRNA(Glu) in a two-step reaction: glutamate is first activated by ATP to form Glu-AMP and then transferred to the acceptor end of tRNA(Glu). This Methanoregula boonei (strain DSM 21154 / JCM 14090 / 6A8) protein is Glutamate--tRNA ligase.